The primary structure comprises 273 residues: Release factor glutamine methyltransferase (273 aa).

Residues 109–113 (GTGSG), Asp-132, Trp-159, and Asn-176 contribute to the S-adenosyl-L-methionine site. 176-179 (NPPY) contributes to the substrate binding site.

It belongs to the protein N5-glutamine methyltransferase family. PrmC subfamily.

It carries out the reaction L-glutaminyl-[peptide chain release factor] + S-adenosyl-L-methionine = N(5)-methyl-L-glutaminyl-[peptide chain release factor] + S-adenosyl-L-homocysteine + H(+). Its function is as follows. Methylates the class 1 translation termination release factors RF1/PrfA and RF2/PrfB on the glutamine residue of the universally conserved GGQ motif. The chain is Release factor glutamine methyltransferase from Neisseria gonorrhoeae (strain ATCC 700825 / FA 1090).